The chain runs to 260 residues: Small ribosomal subunit protein uS2 (260 aa).

Belongs to the universal ribosomal protein uS2 family.

The sequence is that of Small ribosomal subunit protein uS2 from Streptococcus gordonii (strain Challis / ATCC 35105 / BCRC 15272 / CH1 / DL1 / V288).